Here is a 342-residue protein sequence, read N- to C-terminus: (Lyso)-N-acylphosphatidylethanolamine lipase (342 aa).

The region spanning 70–323 (PLVMVHGFGG…EIEGASHHVY (254 aa)) is the AB hydrolase-1 domain.

This sequence belongs to the peptidase S33 family. ABHD4/ABHD5 subfamily. As to expression, highest levels in the CNS and in testis, intermediate levels in liver and kidney. Hardly detectable in heart.

The catalysed reaction is N-hexadecanoyl-1,2-di-(9Z-octadecenoyl)-sn-glycero-3-phosphoethanolamine + H2O = N-hexadecanoyl-1-(9Z-octadecenoyl)-sn-glycero-3-phosphoethanolamine + (9Z)-octadecenoate + H(+). It carries out the reaction an N-acyl-1,2-diacyl-sn-glycero-3-phosphoethanolamine + H2O = N,1-diacyl-sn-glycero-3-phosphoethanolamine + a fatty acid + H(+). The enzyme catalyses N-hexadecanoyl-1-(9Z-octadecenoyl)-sn-glycero-3-phosphoethanolamine + H2O = N-hexadecanoyl-sn-glycero-3-phosphoethanolamine + (9Z)-octadecenoate + H(+). It catalyses the reaction N-octadecanoyl-1-(9Z-octadecenoyl)-sn-glycero-3-phosphoethanolamine + H2O = N-octadecanoyl-sn-glycero-3-phospho-ethanolamine + (9Z)-octadecenoate + H(+). The catalysed reaction is N-eicosanoyl-1-(9Z-octadecenoyl)-sn-glycero-3-phosphoethanolamine + H2O = N-eicosanoyl-sn-glycero-3-phosphoethanolamine + (9Z)-octadecenoate + H(+). It carries out the reaction N,1-di-(9Z-octadecenoyl)-sn-glycero-3-phosphoethanolamine + H2O = N-(9Z-octadecenoyl)-sn-glycero-3-phosphoethanolamine + (9Z)-octadecenoate + H(+). The enzyme catalyses N-(5Z,8Z,11Z,14Z-eicosatetraenoyl)-1-(9Z-octadecenoyl)-sn-glycero-3-phosphoethanolamine + H2O = N-(5Z,8Z,11Z,14Z-eicosatetraenoyl)-sn-glycero-3-phosphoethanolamine + (9Z)-octadecenoate + H(+). It catalyses the reaction 1-octadecanoyl-2-(9Z-octadecenoyl)-sn-glycero-3-phospho-(N-hexadecanoyl)-serine + H2O = 1-octadecanoyl-2-hydroxy-sn-glycero-3-phospho-(N-hexadecanoyl)-serine + (9Z)-octadecenoate + H(+). The catalysed reaction is 1-O-(1Z-octadecenoyl)-2-(9Z-octadecenoyl)-sn-glycero-3-phospho-N-hexadecanoyl-ethanolamine + H2O = 1-O-(1Z-octadecenyl)-sn-glycero-3-phospho-N-hexadecanoyl-ethanolamine + (9Z)-octadecenoate + H(+). It carries out the reaction N,1-diacyl-sn-glycero-3-phosphoethanolamine + H2O = N-acyl-sn-glycero-3-phosphoethanolamine + a fatty acid + H(+). Lysophospholipase selective for N-acyl phosphatidylethanolamine (NAPE). Contributes to the biosynthesis of N-acyl ethanolamines, including the endocannabinoid anandamide by hydrolyzing the sn-1 and sn-2 acyl chains from N-acyl phosphatidylethanolamine (NAPE) generating glycerophospho-N-acyl ethanolamine (GP-NAE), an intermediate for N-acyl ethanolamine biosynthesis. Hydrolyzes substrates bearing saturated, monounsaturated, polyunsaturated N-acyl chains. Shows no significant activity towards other lysophospholipids, including lysophosphatidylcholine, lysophosphatidylethanolamine and lysophosphatidylserine. In Mus musculus (Mouse), this protein is (Lyso)-N-acylphosphatidylethanolamine lipase.